Here is a 457-residue protein sequence, read N- to C-terminus: D-hydantoinase (457 aa).

The Zn(2+) site is built by His-57 and His-59. Ser-69 carries the phosphoserine modification. Lys-148 contacts Zn(2+). Position 148 is an N6-carboxylysine (Lys-148). Tyr-153 serves as a coordination point for substrate. Zn(2+)-binding residues include His-181 and His-237. Thr-286 is a binding site for substrate. A Zn(2+)-binding site is contributed by Asp-313. Asn-335 is a substrate binding site.

The protein belongs to the metallo-dependent hydrolases superfamily. Hydantoinase/dihydropyrimidinase family. In terms of assembly, homotetramer. Zn(2+) is required as a cofactor. Post-translationally, carboxylation allows a single lysine to coordinate two zinc ions.

In terms of biological role, catalyzes the stereospecific hydrolysis of the cyclic amide bond of D-hydantoin derivatives. This Rhizobium radiobacter (Agrobacterium tumefaciens) protein is D-hydantoinase (hyuA).